Reading from the N-terminus, the 65-residue chain is Small hydrophobic protein (65 aa).

Topologically, residues M1 to L20 are intravirion. The segment at I6 to W15 is interaction with host BCAP31. Residues I21 to L44 traverse the membrane as a helical; Signal-anchor for type II membrane protein segment. The segment at I38–K43 is interaction with small-molecule inhibitor. Over S45 to T65 the chain is Virion surface. N52 carries an N-linked (GlcNAc...) asparagine; by host glycan.

Belongs to the orthopneumovirus small hydrophobic protein family. As to quaternary structure, homopentamer forming a funnel-like pore. Interacts with glycoprotein G; this interaction occurs on the surface of virion particles and infected cells. Interacts with host BCAP31 (via C-terminus); this interaction is direct. Four species of SH have been detected in infected cell cytoplasm: a 7.5 kDa non-glycosylated form (SH0), a 13-15 kDa form that contains one or two N-linked carbohydrate side chains of the high-mannose type (SHg), a 21-30 kDa polylactosaminoglycan-modified form of the protein (SHp), and the isoform generated by alternative translational initiation. Of these different forms, SH0 is by far the most abundant protein detected during virus infection. In terms of processing, tyrosine phosphorylated.

The protein localises to the virion membrane. It is found in the host cell membrane. It localises to the host Golgi apparatus membrane. Its subcellular location is the host endoplasmic reticulum membrane. Its activity is regulated as follows. Channel activity is inhibited by copper. Also inhibited by small-molecule pyronin B. In terms of biological role, viroporin that forms a homopentameric ion channel displaying low ion selectivity. May play a role in virus morphogenesis and pathogenicity at various stages of the viral life cycle. Accumulates at the membrane of the Golgi apparatus in infected cells and may facilitate virus release by modifying the secretory pathway. May enhance host membrane permeability and disrupt cellular ion homeostasis, which can be sensed as damage-associated molecular patterns/danger signals, triggering NLRP3 inflammasome activation and inflammatory immune response. Also inhibits host TNFA-mediated signaling pathway and may delay apoptosis, allowing time for the virus to replicate. This is Small hydrophobic protein from Homo sapiens (Human).